Reading from the N-terminus, the 512-residue chain is Glutathione-binding protein GsiB (512 aa).

A signal peptide spans 1–26 (MARAVHRSGLVALGIATALMASCAFA).

It belongs to the bacterial solute-binding protein 5 family. In terms of assembly, the complex is composed of two ATP-binding proteins (GsiA), two transmembrane proteins (GsiC and GsiD) and a solute-binding protein (GsiB). In the presence of glutathione, interacts with the transmembrane proteins GsiC and GsiD.

The protein localises to the periplasm. Its function is as follows. Part of the ABC transporter complex GsiABCD involved in glutathione import. Binds glutathione. The sequence is that of Glutathione-binding protein GsiB from Escherichia coli (strain K12).